We begin with the raw amino-acid sequence, 87 residues long: Small ribosomal subunit protein uS17 (87 aa).

Belongs to the universal ribosomal protein uS17 family. Part of the 30S ribosomal subunit.

One of the primary rRNA binding proteins, it binds specifically to the 5'-end of 16S ribosomal RNA. This chain is Small ribosomal subunit protein uS17, found in Heliobacterium modesticaldum (strain ATCC 51547 / Ice1).